Reading from the N-terminus, the 634-residue chain is UPF0329 protein ECU07_1850/ECU10_0050 (634 aa).

2 stretches are compositionally biased toward basic and acidic residues: residues 354 to 365 (REEREKREESKG) and 397 to 407 (GESKEEDRGEE). The interval 354–438 (REEREKREES…KGSGEKRISE (85 aa)) is disordered. Positions 408–417 (GGVEAEDPLE) are enriched in acidic residues.

It belongs to the UPF0329 family.

This chain is UPF0329 protein ECU07_1850/ECU10_0050, found in Encephalitozoon cuniculi (strain GB-M1) (Microsporidian parasite).